The primary structure comprises 257 residues: Thiazole synthase (257 aa).

The Schiff-base intermediate with DXP role is filled by Lys-96. 1-deoxy-D-xylulose 5-phosphate is bound by residues Gly-157, 184-185, and 206-207; these read AG and NT.

The protein belongs to the ThiG family. In terms of assembly, homotetramer. Forms heterodimers with either ThiH or ThiS.

The protein resides in the cytoplasm. It catalyses the reaction [ThiS sulfur-carrier protein]-C-terminal-Gly-aminoethanethioate + 2-iminoacetate + 1-deoxy-D-xylulose 5-phosphate = [ThiS sulfur-carrier protein]-C-terminal Gly-Gly + 2-[(2R,5Z)-2-carboxy-4-methylthiazol-5(2H)-ylidene]ethyl phosphate + 2 H2O + H(+). Its pathway is cofactor biosynthesis; thiamine diphosphate biosynthesis. Its function is as follows. Catalyzes the rearrangement of 1-deoxy-D-xylulose 5-phosphate (DXP) to produce the thiazole phosphate moiety of thiamine. Sulfur is provided by the thiocarboxylate moiety of the carrier protein ThiS. In vitro, sulfur can be provided by H(2)S. This Rhizobium rhizogenes (strain K84 / ATCC BAA-868) (Agrobacterium radiobacter) protein is Thiazole synthase.